A 278-amino-acid chain; its full sequence is Rhomboid protease GlpG (278 aa).

The next 6 membrane-spanning stretches (helical) occupy residues 94–114 (AGPL…LMLI), 143–163 (AFLH…WYLG), 175–195 (LLVL…LFSG), 196–216 (ANFG…WLTG), 224–241 (ISLP…LIAG), and 245–267 (ILGL…LMAF). Catalysis depends on serine 202, which acts as the Nucleophile. Histidine 255 is a catalytic residue.

Belongs to the peptidase S54 family.

Its subcellular location is the cell inner membrane. The enzyme catalyses Cleaves type-1 transmembrane domains using a catalytic dyad composed of serine and histidine that are contributed by different transmembrane domains.. Its function is as follows. Rhomboid-type serine protease that catalyzes intramembrane proteolysis. In Yersinia pseudotuberculosis serotype I (strain IP32953), this protein is Rhomboid protease GlpG.